An 855-amino-acid chain; its full sequence is MITAIAKKIFGTRNDKEIKKYFKRVALINALEGKYSNLSDDELKSEFSKLKVDLLSKKVTKDDILNDVFAIVREVSKRTLNMRHFDVQLIGGMVLNDGRIAEMKTGEGKTLVATLPVVLNAMDEKGVHVVTVNDYLAKRDATQMSEIYNFLGLSVGVILSGEYDDEKRKIAYNSDITYGTNNEFGFDYLRDNMKFEVGQKVQREHNFVIVDEVDSILIDEARTPLIISGPTNRTLDGYIQADVVAKQLVRGEAADPRVPNSKATGDFVVDEKNRTIMITEAGIAKAEKLFGVDNLYNLENAILSHHLDQALKAHNLFEKDVHYVVRDSQVIIVDEFTGRLSEGRRFSEGLHQALEAKEGVKIQEESQTLADITFQNYFRMYSRLSGMTGTAQTEATEFSQIYKLEVISIPTNVPIKRVDRDDLIYKTENEKFKAVIEEIKRSNIKGQPVLVGTASIEKSEIFHKMLVKEKIAHSVLNAKNHEKEAEIIAQAGAKGAVTIATNMAGRGVDIRIDDEVRELGGLYIIGTERHESRRIDNQLRGRAGRQGDPGLSRFYLSLEDSLLRIFGSDKIKAIMDRLGIEEGESIESRLVTRAVENAQKKVESLHFESRKHILEYDDVANEQRKTVYKYRDELLNPDYDLKDKIISNRQDFVKTLLDEVNIFDGGLGDEFDISRLCEVVYGESGTKIDEDEIKGLDYHSLADKVIDKLAKDYDEKMSVIDDEQRKNIEKVLYLQVLDGAWREHLYQMDILKTGIGLRGYNQKDPLTEYKKESYNLFMELVNRLKNESIKTLQIVRFKTEDDENTDRALEKMQDEANLQNKFEKKPARNEPCPCGSGKKYKDCCGKSGPKKGVFA.

Residues glutamine 88, 106-110 (GEGKT), and aspartate 509 contribute to the ATP site. A disordered region spans residues 815–837 (EANLQNKFEKKPARNEPCPCGSG). The Zn(2+) site is built by cysteine 832, cysteine 834, cysteine 843, and cysteine 844.

The protein belongs to the SecA family. In terms of assembly, monomer and homodimer. Part of the essential Sec protein translocation apparatus which comprises SecA, SecYEG and auxiliary proteins SecDF-YajC and YidC. It depends on Zn(2+) as a cofactor.

It is found in the cell inner membrane. Its subcellular location is the cytoplasm. The catalysed reaction is ATP + H2O + cellular proteinSide 1 = ADP + phosphate + cellular proteinSide 2.. Part of the Sec protein translocase complex. Interacts with the SecYEG preprotein conducting channel. Has a central role in coupling the hydrolysis of ATP to the transfer of proteins into and across the cell membrane, serving as an ATP-driven molecular motor driving the stepwise translocation of polypeptide chains across the membrane. The chain is Protein translocase subunit SecA from Campylobacter fetus subsp. fetus (strain 82-40).